Here is a 130-residue protein sequence, read N- to C-terminus: Serum amyloid A protein (130 aa).

Positions methionine 1 to serine 18 are cleaved as a signal peptide. Glutamine 19 is subject to Pyrrolidone carboxylic acid. The disordered stretch occupies residues threonine 86 to tyrosine 130.

It belongs to the SAA family. This protein is the precursor of amyloid protein A, which is formed by the removal of residues from the C-terminal end. Expressed by the liver; secreted in plasma.

The protein resides in the secreted. Its function is as follows. Major acute phase reactant. Apolipoprotein of the HDL complex. This is Serum amyloid A protein (SAA1) from Bos taurus (Bovine).